The chain runs to 188 residues: Large ribosomal subunit protein eL18 (188 aa).

Residues 147-188 (EAEKHFGPAPGVPHSHTKPYVRSKGRKFERARGRRASRAYKN) form a disordered region. Composition is skewed to basic residues over residues 161-171 (SHTKPYVRSKG) and 178-188 (RGRRASRAYKN).

It belongs to the eukaryotic ribosomal protein eL18 family.

The protein localises to the cytoplasm. This is Large ribosomal subunit protein eL18 (rpl-18) from Caenorhabditis elegans.